A 42-amino-acid chain; its full sequence is Photosystem I reaction center subunit IX (42 aa).

A helical transmembrane segment spans residues 7 to 27; that stretch reads YLSTAPVLAAVWFGFLAGLLI.

This sequence belongs to the PsaJ family.

It localises to the plastid. The protein resides in the chloroplast thylakoid membrane. Functionally, may help in the organization of the PsaE and PsaF subunits. This chain is Photosystem I reaction center subunit IX, found in Nephroselmis olivacea (Green alga).